A 176-amino-acid polypeptide reads, in one-letter code: ATP-dependent protease subunit HslV (176 aa).

Thr6 is a catalytic residue. Na(+) is bound by residues Ser161, Cys164, and Thr167.

It belongs to the peptidase T1B family. HslV subfamily. In terms of assembly, a double ring-shaped homohexamer of HslV is capped on each side by a ring-shaped HslU homohexamer. The assembly of the HslU/HslV complex is dependent on binding of ATP.

Its subcellular location is the cytoplasm. The enzyme catalyses ATP-dependent cleavage of peptide bonds with broad specificity.. Its activity is regulated as follows. Allosterically activated by HslU binding. Protease subunit of a proteasome-like degradation complex believed to be a general protein degrading machinery. This chain is ATP-dependent protease subunit HslV, found in Pseudothermotoga lettingae (strain ATCC BAA-301 / DSM 14385 / NBRC 107922 / TMO) (Thermotoga lettingae).